A 220-amino-acid polypeptide reads, in one-letter code: N-(5'-phosphoribosyl)anthranilate isomerase (220 aa).

This sequence belongs to the TrpF family.

The catalysed reaction is N-(5-phospho-beta-D-ribosyl)anthranilate = 1-(2-carboxyphenylamino)-1-deoxy-D-ribulose 5-phosphate. It functions in the pathway amino-acid biosynthesis; L-tryptophan biosynthesis; L-tryptophan from chorismate: step 3/5. In Gloeothece citriformis (strain PCC 7424) (Cyanothece sp. (strain PCC 7424)), this protein is N-(5'-phosphoribosyl)anthranilate isomerase.